A 514-amino-acid chain; its full sequence is Voltage-gated potassium channel regulatory subunit KCNG1 (514 aa).

Residues 1-224 are Cytoplasmic-facing; that stretch reads MTLLPGDNSH…DMVERPHSGL (224 aa). The segment covering 180–196 has biased composition (acidic residues); the sequence is MEREEEEEPLDSEDQES. The interval 180–205 is disordered; that stretch reads MEREEEEEPLDSEDQESEGPSASEGR. Residues 225–246 form a helical membrane-spanning segment; that stretch reads PGKVFACLSVLFVTVTAVNLSV. Residues 247-267 lie on the Extracellular side of the membrane; sequence STLPSLREEEEQGQCSQMCHN. A helical membrane pass occupies residues 268–289; sequence VFIVESVCVGWFSLEFLLRFIQ. Residues 290–300 are Cytoplasmic-facing; it reads APSKFAFLRSP. Residues 301–321 form a helical membrane-spanning segment; that stretch reads LTLIDLVAILPYYVTLLVDGA. The Extracellular portion of the chain corresponds to 322–338; sequence ASSRRKPSTGNSYLDKV. A helical; Voltage-sensor membrane pass occupies residues 339–359; that stretch reads GLVLRVLRALRILYVMRLARH. The Cytoplasmic segment spans residues 360 to 374; the sequence is SLGLQTLGLTARRCT. Residues 375 to 396 traverse the membrane as a helical segment; it reads REFGLLLLFLCVAIALFAPLLY. Topologically, residues 397-411 are extracellular; it reads VIENEMADSPEFTSI. An intramembrane region (helical) is located at residues 412–423; the sequence is PACYWWAVITMT. The short motif at 424-429 is the Selectivity filter element; it reads TVGYGD. Residues 424–431 lie within the membrane without spanning it; it reads TVGYGDMV. Residues 432-438 are Extracellular-facing; it reads PRSTPGQ. A helical membrane pass occupies residues 439 to 467; that stretch reads VVALSSILSGILLMAFPVTSIFHTFSRSY. The Cytoplasmic segment spans residues 468-514; sequence LELKQEQERVLIRRAQYLIKTKSQLSGMSQDSDILFGSASSDTRDNN.

It belongs to the potassium channel family. G (TC 1.A.1.2) subfamily. Kv6.1/KCNG1 sub-subfamily. In terms of assembly, heterotetramer with KCNB1 or KCNB2.

The protein localises to the cell membrane. In terms of biological role, regulatory alpha-subunit of the voltage-gated potassium (Kv) channel which, when coassembled with KCNB1 or KCNB2, can modulate their expression and their gating kinetics by acting on deactivation upon repolarization and inactivation during maintained depolarization. Potassium channel subunit that does not form functional channels by itself. This is Voltage-gated potassium channel regulatory subunit KCNG1 from Mus musculus (Mouse).